Consider the following 432-residue polypeptide: D-amino acid dehydrogenase (432 aa).

FAD is bound at residue 3 to 17 (VVILGSGVVGVTSAW).

It belongs to the DadA oxidoreductase family. Requires FAD as cofactor.

The catalysed reaction is a D-alpha-amino acid + A + H2O = a 2-oxocarboxylate + AH2 + NH4(+). It functions in the pathway amino-acid degradation; D-alanine degradation; NH(3) and pyruvate from D-alanine: step 1/1. In terms of biological role, oxidative deamination of D-amino acids. The sequence is that of D-amino acid dehydrogenase from Citrobacter koseri (strain ATCC BAA-895 / CDC 4225-83 / SGSC4696).